We begin with the raw amino-acid sequence, 439 residues long: SET domain-containing protein 4 (439 aa).

Basic residues predominate over residues 1–19; it reads MQRRRGRTERARKRRRRSS. A disordered region spans residues 1–25; sequence MQRRRGRTERARKRRRRSSGSRAVN. The region spanning 47-272 is the SET domain; that stretch reads TDLVPASFPG…KHQEVFICYG (226 aa). Tyr-271 is a binding site for S-adenosyl-L-methionine.

The protein belongs to the class V-like SAM-binding methyltransferase superfamily. SETD4 family. As to quaternary structure, forms a ternary complex with TBK1 and ZNF268; the interaction with TBK1 is ZNF268-dependent and leads to TBK1 monomethylation. As to expression, expressed in the forebrain subventricular zone, in quiescent neural stem cells.

It localises to the cytoplasm. It is found in the cytosol. The protein resides in the nucleus. The enzyme catalyses L-lysyl(4)-[histone H3] + S-adenosyl-L-methionine = N(6)-methyl-L-lysyl(4)-[histone H3] + S-adenosyl-L-homocysteine + H(+). It carries out the reaction N(6)-methyl-L-lysyl(4)-[histone H3] + S-adenosyl-L-methionine = N(6),N(6)-dimethyl-L-lysyl(4)-[histone H3] + S-adenosyl-L-homocysteine + H(+). It catalyses the reaction L-lysyl(20)-[histone H4] + S-adenosyl-L-methionine = N(6)-methyl-L-lysyl(20)-[histone H4] + S-adenosyl-L-homocysteine + H(+). The catalysed reaction is N(6)-methyl-L-lysyl(20)-[histone H4] + S-adenosyl-L-methionine = N(6),N(6)-dimethyl-L-lysyl(20)-[histone H4] + S-adenosyl-L-homocysteine + H(+). The enzyme catalyses N(6),N(6)-dimethyl-L-lysyl(20)-[histone H4] + S-adenosyl-L-methionine = N(6),N(6),N(6)-trimethyl-L-lysyl(20)-[histone H4] + S-adenosyl-L-homocysteine + H(+). It carries out the reaction L-lysyl-[protein] + S-adenosyl-L-methionine = N(6)-methyl-L-lysyl-[protein] + S-adenosyl-L-homocysteine + H(+). Protein-lysine N-methyltransferase that methylates both histones and non-histone proteins. Via its catalytic activity, regulates many processes, including cell proliferation, cell differentiation, inflammatory response and apoptosis. Regulates the inflammatory response by mediating mono- and dimethylation of 'Lys-4' of histone H3 (H3K4me1 and H3K4me2, respectively), leading to activate the transcription of pro-inflammatory cytokines IL6 and TNF-alpha. Also involved in the regulation of stem cell quiescence by catalyzing the trimethylation of 'Lys-20' of histone H4 (H4K20me3), thereby promoting heterochromatin formation. In the brain, epigenetically controls quiescence of neural stem cells for sustaining a protected neural stem cell population and maintaining a stem cell reservoir for neurogenesis. Involved in proliferation, migration, paracrine and myogenic differentiation of bone marrow mesenchymal stem cells (BMSCs). Through the catalysis of XRCC5/Ku70 trimethylation, regulates BAX-mediated apoptosis. SETD4-catalyzed XRCC5 methylation results in XRCC5 translocation to the cytoplasm, where it interacts with BAX, sequestering it from the mitochondria, hence preventing BAX-mediated apoptosis. This Mus musculus (Mouse) protein is SET domain-containing protein 4.